The chain runs to 2617 residues: DNA-directed RNA polymerase subunit beta'' (2617 aa).

Positions 263, 334, 341, and 344 each coordinate Zn(2+).

The protein belongs to the RNA polymerase beta' chain family. RpoC2 subfamily. In plastids the minimal PEP RNA polymerase catalytic core is composed of four subunits: alpha, beta, beta', and beta''. When a (nuclear-encoded) sigma factor is associated with the core the holoenzyme is formed, which can initiate transcription. It depends on Zn(2+) as a cofactor.

The protein localises to the plastid. The protein resides in the chloroplast. The enzyme catalyses RNA(n) + a ribonucleoside 5'-triphosphate = RNA(n+1) + diphosphate. Functionally, DNA-dependent RNA polymerase catalyzes the transcription of DNA into RNA using the four ribonucleoside triphosphates as substrates. This is DNA-directed RNA polymerase subunit beta'' from Oedogonium cardiacum (Filamentous green alga).